The following is a 54-amino-acid chain: VHWTAEEKQIILAIWAKIDIEEAGAAALSRLLVVYPWTQRYFKNFGNLSSPTAI.

One can recognise a Globin domain in the interval 2-54; it reads HWTAEEKQIILAIWAKIDIEEAGAAALSRLLVVYPWTQRYFKNFGNLSSPTAI.

This sequence belongs to the globin family.

Its function is as follows. Hemoglobin omega chain is an embryonic-type beta-type chain found in prenatal and neonatal marsupials. The polypeptide is Hemoglobin subunit omega (Notamacropus eugenii (Tammar wallaby)).